Reading from the N-terminus, the 215-residue chain is 2-phospho-L-lactate guanylyltransferase (215 aa).

This sequence belongs to the CofC family. Homodimer.

The enzyme catalyses (2S)-2-phospholactate + GTP + H(+) = (2S)-lactyl-2-diphospho-5'-guanosine + diphosphate. It participates in cofactor biosynthesis; coenzyme F420 biosynthesis. In terms of biological role, guanylyltransferase that catalyzes the activation of (2S)-2-phospholactate (2-PL) as (2S)-lactyl-2-diphospho-5'-guanosine, via the condensation of 2-PL with GTP. It is involved in the biosynthesis of coenzyme F420, a hydride carrier cofactor. The chain is 2-phospho-L-lactate guanylyltransferase from Methanococcoides burtonii (strain DSM 6242 / NBRC 107633 / OCM 468 / ACE-M).